A 310-amino-acid polypeptide reads, in one-letter code: GPN-loop GTPase 2 (310 aa).

At A2 the chain carries N-acetylalanine. 19–24 (GSGKTT) is a GTP binding site. The Gly-Pro-Asn (GPN)-loop; involved in dimer interface motif lies at 76–78 (GPN). 178-181 (SKMD) contributes to the GTP binding site.

The protein belongs to the GPN-loop GTPase family. As to quaternary structure, heterodimers with GPN1 or GPN3. Binds to RNA polymerase II (RNAPII).

Small GTPase required for proper localization of RNA polymerase II and III (RNAPII and RNAPIII). May act at an RNAP assembly step prior to nuclear import. The protein is GPN-loop GTPase 2 of Mus musculus (Mouse).